The chain runs to 1297 residues: Phosphoribosylformylglycinamidine synthase (1297 aa).

Residues 307-318 (GASTGSGGEIRD) and Ala-678 contribute to the ATP site. The Mg(2+) site is built by Glu-718, Asn-722, and Asp-886. The Glutamine amidotransferase type-1 domain occupies 1044–1297 (MAILREQGVN…MFQNARKYFG (254 aa)). The active-site Nucleophile is the Cys-1137. Residues His-1262 and Glu-1264 contribute to the active site.

In the N-terminal section; belongs to the FGAMS family. In terms of assembly, monomer.

It is found in the cytoplasm. It carries out the reaction N(2)-formyl-N(1)-(5-phospho-beta-D-ribosyl)glycinamide + L-glutamine + ATP + H2O = 2-formamido-N(1)-(5-O-phospho-beta-D-ribosyl)acetamidine + L-glutamate + ADP + phosphate + H(+). The protein operates within purine metabolism; IMP biosynthesis via de novo pathway; 5-amino-1-(5-phospho-D-ribosyl)imidazole from N(2)-formyl-N(1)-(5-phospho-D-ribosyl)glycinamide: step 1/2. Functionally, phosphoribosylformylglycinamidine synthase involved in the purines biosynthetic pathway. Catalyzes the ATP-dependent conversion of formylglycinamide ribonucleotide (FGAR) and glutamine to yield formylglycinamidine ribonucleotide (FGAM) and glutamate. In Vibrio cholerae serotype O1 (strain ATCC 39315 / El Tor Inaba N16961), this protein is Phosphoribosylformylglycinamidine synthase.